The chain runs to 168 residues: GTP-dependent dephospho-CoA kinase (168 aa).

Positions 49, 50, 51, 68, 70, and 120 each coordinate GTP.

Belongs to the GTP-dependent DPCK family.

The enzyme catalyses 3'-dephospho-CoA + GTP = GDP + CoA + H(+). It participates in cofactor biosynthesis; coenzyme A biosynthesis. In terms of biological role, catalyzes the GTP-dependent phosphorylation of the 3'-hydroxyl group of dephosphocoenzyme A to form coenzyme A (CoA). This Pyrobaculum islandicum (strain DSM 4184 / JCM 9189 / GEO3) protein is GTP-dependent dephospho-CoA kinase.